The chain runs to 81 residues: Toxin MIT1 (81 aa).

5 disulfides stabilise this stretch: Cys-7–Cys-19, Cys-13–Cys-31, Cys-18–Cys-59, Cys-41–Cys-67, and Cys-61–Cys-77.

It belongs to the AVIT (prokineticin) family. As to expression, expressed by the venom gland.

It is found in the secreted. Functionally, potent agonist for both PKR1/PROKR1 and PKR2/PROKR2. Potently contracts gastrointestinal (GI) smooth muscle. The chain is Toxin MIT1 from Dendroaspis polylepis polylepis (Black mamba).